The following is a 90-amino-acid chain: Small ribosomal subunit protein bS20 (90 aa).

The segment at 1 to 25 (MANSAQARKRARQAAKANSHNSALR) is disordered.

This sequence belongs to the bacterial ribosomal protein bS20 family.

Its function is as follows. Binds directly to 16S ribosomal RNA. The sequence is that of Small ribosomal subunit protein bS20 from Burkholderia orbicola (strain MC0-3).